Here is a 646-residue protein sequence, read N- to C-terminus: Peptidylprolyl isomerase domain and WD repeat-containing protein 1 (646 aa).

Residues Met-1 to Arg-30 are disordered. Ala-2 is subject to N-acetylalanine. The span at Arg-17–Arg-30 shows a compositional bias: basic and acidic residues. WD repeat units follow at residues Met-88–Val-126, Ser-131–Met-170, Leu-221–Pro-260, and Lys-278–Asp-319. Residues Glu-455–Val-478 are compositionally biased toward basic and acidic residues. A disordered region spans residues Glu-455 to Val-490. One can recognise a PPIase cyclophilin-type domain in the interval Val-490 to Val-645.

Belongs to the cyclophilin-type PPIase family. PPIL1 subfamily. Identified in the spliceosome C complex.

It is found in the nucleus. It catalyses the reaction [protein]-peptidylproline (omega=180) = [protein]-peptidylproline (omega=0). Its activity is regulated as follows. Inhibited by cyclosporin A (CsA). Functionally, PPIase that catalyzes the cis-trans isomerization of proline imidic peptide bonds in oligopeptides and may therefore assist protein folding. May be involved in pre-mRNA splicing. This chain is Peptidylprolyl isomerase domain and WD repeat-containing protein 1, found in Pongo abelii (Sumatran orangutan).